A 327-amino-acid polypeptide reads, in one-letter code: Methionyl-tRNA formyltransferase (327 aa).

121–124 (SLLP) is a (6S)-5,6,7,8-tetrahydrofolate binding site.

Belongs to the Fmt family.

The enzyme catalyses L-methionyl-tRNA(fMet) + (6R)-10-formyltetrahydrofolate = N-formyl-L-methionyl-tRNA(fMet) + (6S)-5,6,7,8-tetrahydrofolate + H(+). In terms of biological role, attaches a formyl group to the free amino group of methionyl-tRNA(fMet). The formyl group appears to play a dual role in the initiator identity of N-formylmethionyl-tRNA by promoting its recognition by IF2 and preventing the misappropriation of this tRNA by the elongation apparatus. The sequence is that of Methionyl-tRNA formyltransferase from Burkholderia ambifaria (strain ATCC BAA-244 / DSM 16087 / CCUG 44356 / LMG 19182 / AMMD) (Burkholderia cepacia (strain AMMD)).